Reading from the N-terminus, the 207-residue chain is Outer-membrane lipoprotein carrier protein (207 aa).

The N-terminal stretch at 1–21 (MRLFRVLLLSAVAFALSPAQA) is a signal peptide.

The protein belongs to the LolA family. Monomer.

The protein resides in the periplasm. In terms of biological role, participates in the translocation of lipoproteins from the inner membrane to the outer membrane. Only forms a complex with a lipoprotein if the residue after the N-terminal Cys is not an aspartate (The Asp acts as a targeting signal to indicate that the lipoprotein should stay in the inner membrane). The protein is Outer-membrane lipoprotein carrier protein of Azotobacter vinelandii (strain DJ / ATCC BAA-1303).